A 345-amino-acid chain; its full sequence is Phosphoribosylformylglycinamidine cyclo-ligase (345 aa).

Belongs to the AIR synthase family.

The protein resides in the cytoplasm. The enzyme catalyses 2-formamido-N(1)-(5-O-phospho-beta-D-ribosyl)acetamidine + ATP = 5-amino-1-(5-phospho-beta-D-ribosyl)imidazole + ADP + phosphate + H(+). The protein operates within purine metabolism; IMP biosynthesis via de novo pathway; 5-amino-1-(5-phospho-D-ribosyl)imidazole from N(2)-formyl-N(1)-(5-phospho-D-ribosyl)glycinamide: step 2/2. The chain is Phosphoribosylformylglycinamidine cyclo-ligase from Anaeromyxobacter dehalogenans (strain 2CP-C).